Consider the following 372-residue polypeptide: MDMRTSFLCVTYVILLTGSACGLQITSTGQTSIEKASGESVKLDCQFTLASDDSGPLDIEWSLQPSDNQKEEKVVIVYSGDRAFEHYYDPLKGRVHFNSPDPKNGDASMNIMGLKATDTGTYQCKIKKVPGIASRKYLLTVMVRPSKPKCSAEGQTYVGKNMVLKCSSVEGTQPMEYIWERTSGNKLLPPLAILDKVTGTMTLKNATGDASGTYRCQAKNRVGTEECVVEVTITQPPNTAGIIAGVIICILLLLILLALILFCCCRARHKKKYEKEIAYEIREDVPPPKSRVSTARSFTSVGSQRSSLGSMSPSNLHEYSKPQYDKIPSEEYDRPPSHAPIPPPSRMAGPNLSRMGAIPVMIPAQNKDGSIV.

An N-terminal signal peptide occupies residues 1-22 (MDMRTSFLCVTYVILLTGSACG). 2 Ig-like C2-type domains span residues 23–140 (LQIT…YLLT) and 130–234 (PGIA…VTIT). Topologically, residues 23 to 241 (LQITSTGQTS…TITQPPNTAG (219 aa)) are extracellular. 3 disulfide bridges follow: cysteine 45-cysteine 124, cysteine 150-cysteine 227, and cysteine 166-cysteine 216. A glycan (N-linked (GlcNAc...) asparagine) is linked at asparagine 205. Residues 242–262 (IIAGVIICILLLLILLALILF) traverse the membrane as a helical segment. Residues 263–372 (CCCRARHKKK…PAQNKDGSIV (110 aa)) lie on the Cytoplasmic side of the membrane. Residues 286 to 352 (PPPKSRVSTA…PPSRMAGPNL (67 aa)) are disordered. Residues 291 to 317 (RVSTARSFTSVGSQRSSLGSMSPSNLH) show a composition bias toward polar residues. A compositionally biased stretch (basic and acidic residues) spans 318–336 (EYSKPQYDKIPSEEYDRPP).

In terms of assembly, monomer. Probably homodimer formed by 2 molecules on adjacent cells.

The protein localises to the cell membrane. The protein resides in the basolateral cell membrane. Its subcellular location is the cell junction. It localises to the tight junction. It is found in the adherens junction. Functionally, may function as a homophilic cell adhesion molecule and be essential for tight junction integrity. May also be involved in transepithelial migration of leukocytes through adhesive interactions with jaml. The interaction between both receptors may also mediate the activation of gamma-delta T-cells, a subpopulation of T-cells residing in epithelia and involved in tissue homeostasis and repair. This Danio rerio (Zebrafish) protein is Coxsackievirus and adenovirus receptor homolog (cxadr).